A 494-amino-acid chain; its full sequence is NAD(P)H-quinone oxidoreductase subunit 2 B, chloroplastic (494 aa).

A run of 14 helical transmembrane segments spans residues 13–33 (SILPECILILSLIVTIIIDLI), 39–59 (TPWLYLVSLTALVTSVVILLF), 81–101 (IFRLFILICSLLCIPLSIDYI), 107–127 (ALTEFLLFILTATLGGMFLCC), 131–151 (LVTIFVALECLGLSSYLLSGY), 166–186 (LLMGGASSSILVYGFSLLYGL), 211–231 (MFISMIFLLVGVGFKLSLVPF), 243–263 (PTPVVAFFSVTSKVAALALAT), 277–297 (WHLLLEILAISSMILGNFIAV), 305–325 (MLAYSSISQIGYIIIGVIAAE), 336–356 (YMLIYIFMNLGTFACITLFGL), 378–398 (LSLVLCLLSLGGIPPLSGFFG), 411–433 (LYFLVPIALSTSVISMYYYLKII), and 468–488 (MIICVVASTLPGILINPIIAI).

Belongs to the complex I subunit 2 family. NDH is composed of at least 16 different subunits, 5 of which are encoded in the nucleus.

Its subcellular location is the plastid. It is found in the chloroplast thylakoid membrane. It catalyses the reaction a plastoquinone + NADH + (n+1) H(+)(in) = a plastoquinol + NAD(+) + n H(+)(out). The enzyme catalyses a plastoquinone + NADPH + (n+1) H(+)(in) = a plastoquinol + NADP(+) + n H(+)(out). In terms of biological role, NDH shuttles electrons from NAD(P)H:plastoquinone, via FMN and iron-sulfur (Fe-S) centers, to quinones in the photosynthetic chain and possibly in a chloroplast respiratory chain. The immediate electron acceptor for the enzyme in this species is believed to be plastoquinone. Couples the redox reaction to proton translocation, and thus conserves the redox energy in a proton gradient. The polypeptide is NAD(P)H-quinone oxidoreductase subunit 2 B, chloroplastic (Angiopteris evecta (Mule's foot fern)).